The chain runs to 233 residues: Tropomyosin (233 aa).

A coiled-coil region spans residues 6-222; it reads FDTVNEKYQE…KERYKAISDE (217 aa). Residues 48 to 88 form a disordered region; the sequence is MERSEERLQTATEKLEEASKAADESERNRKVLENLNNASEE. Residues 51 to 79 are compositionally biased toward basic and acidic residues; sequence SEERLQTATEKLEEASKAADESERNRKVL.

It belongs to the tropomyosin family. Homodimer.

Its function is as follows. Tropomyosin, in association with the troponin complex, plays a central role in the calcium dependent regulation of muscle contraction. This is Tropomyosin from Magallana gigas (Pacific oyster).